Here is a 251-residue protein sequence, read N- to C-terminus: Glucosamine-6-phosphate deaminase (251 aa).

Asp67 (proton acceptor; for enolization step) is an active-site residue. Asn136 (for ring-opening step) is an active-site residue. His138 serves as the catalytic Proton acceptor; for ring-opening step. Glu143 functions as the For ring-opening step in the catalytic mechanism.

Belongs to the glucosamine/galactosamine-6-phosphate isomerase family. NagB subfamily.

It catalyses the reaction alpha-D-glucosamine 6-phosphate + H2O = beta-D-fructose 6-phosphate + NH4(+). Its pathway is amino-sugar metabolism; N-acetylneuraminate degradation; D-fructose 6-phosphate from N-acetylneuraminate: step 5/5. Functionally, catalyzes the reversible isomerization-deamination of glucosamine 6-phosphate (GlcN6P) to form fructose 6-phosphate (Fru6P) and ammonium ion. The chain is Glucosamine-6-phosphate deaminase from Geobacillus sp. (strain WCH70).